Here is a 600-residue protein sequence, read N- to C-terminus: Elongation factor 4 (600 aa).

Residues 5–187 enclose the tr-type G domain; that stretch reads KYIRNFSIVA…EIVEKIPAPE (183 aa). GTP is bound by residues 17 to 22 and 134 to 137; these read DHGKST and NKVD.

It belongs to the TRAFAC class translation factor GTPase superfamily. Classic translation factor GTPase family. LepA subfamily.

It is found in the cell membrane. The enzyme catalyses GTP + H2O = GDP + phosphate + H(+). Its function is as follows. Required for accurate and efficient protein synthesis under certain stress conditions. May act as a fidelity factor of the translation reaction, by catalyzing a one-codon backward translocation of tRNAs on improperly translocated ribosomes. Back-translocation proceeds from a post-translocation (POST) complex to a pre-translocation (PRE) complex, thus giving elongation factor G a second chance to translocate the tRNAs correctly. Binds to ribosomes in a GTP-dependent manner. In Clostridium perfringens (strain 13 / Type A), this protein is Elongation factor 4.